Reading from the N-terminus, the 300-residue chain is Cathepsin B-like CP2 (300 aa).

The N-terminal stretch at 1 to 19 (MKLFLLAAAAFSAPALTVS) is a signal peptide. Disulfide bonds link Cys-88–Cys-115, Cys-98–Cys-141, and Cys-134–Cys-177. Cys-101 is a catalytic residue. Catalysis depends on residues His-245 and Asn-266.

Belongs to the peptidase C1 family.

It localises to the vacuole. Its function is as follows. Thiol protease which is required for parasite excystation and invasion of the proximal small intestine of the human host. The polypeptide is Cathepsin B-like CP2 (CP2) (Giardia intestinalis (Giardia lamblia)).